The chain runs to 570 residues: Peptidyl-prolyl cis-trans isomerase FKBP9 (570 aa).

A signal peptide spans 1–24 (MAFGARGWRRWSLLLLLLWVTGQA). PPIase FKBP-type domains are found at residues 54-142 (GDFV…VDIW), 166-254 (SDFV…LDLH), 278-365 (GDFL…IDFH), and 389-477 (GDYL…LELV). Asn-174, Asn-286, Asn-302, and Asn-397 each carry an N-linked (GlcNAc...) asparagine glycan. EF-hand domains follow at residues 488–523 (WNGEVSPNLFEEIDKDGNGEVLLEEFSEYIHAQVAS) and 533–568 (NAEMIVKNMFTNQDRNGDGKVTAEEFKLKDQETKHD). Ca(2+)-binding residues include Asp-501, Asp-503, Asn-505, Glu-507, Glu-512, Asp-546, Asn-548, Asp-550, Lys-552, and Glu-557. The Prevents secretion from ER motif lies at 567 to 570 (HDEL).

Phosphorylated.

The protein localises to the endoplasmic reticulum lumen. The enzyme catalyses [protein]-peptidylproline (omega=180) = [protein]-peptidylproline (omega=0). With respect to regulation, inhibited by FK506. In terms of biological role, PPIases accelerate the folding of proteins during protein synthesis. The polypeptide is Peptidyl-prolyl cis-trans isomerase FKBP9 (Fkbp9) (Rattus norvegicus (Rat)).